A 226-amino-acid chain; its full sequence is Glyceraldehyde 3-phosphate phosphatase (226 aa).

This sequence belongs to the HAD-like hydrolase superfamily. Mg(2+) is required as a cofactor.

In terms of biological role, catalyzes the dephosphorylation of D,L-glyceraldehyde 3-phosphate in vitro. The sequence is that of Glyceraldehyde 3-phosphate phosphatase from Methanothermobacter thermautotrophicus (strain ATCC 29096 / DSM 1053 / JCM 10044 / NBRC 100330 / Delta H) (Methanobacterium thermoautotrophicum).